Consider the following 286-residue polypeptide: MIYQTDNDKLYRYLFKDRAVRGEWVRLNKTFTDTLNSHEYPRIVRNLLGEMMVATNLLTATLKFKGNITIQIQGNGPLKLLLVNGSDSQQIRALARLQDDVYDDMTLSELVGNGILVITIAPTNGERYQGVIALDKPTIAECLEDYFIRSEQLQTQLLIRSGEYEGKPVAAGLLLQIMPDGTGSQEDFEHLATLAATVKDEELFGLTAENLLYRLYHEETVEIYPPSAVEFHCGCSLERSGSALLLISDDEIENILTEHGGSIDMQCECCGTHYFFDKKTIEKLKA.

2 disulfides stabilise this stretch: C233/C235 and C267/C270.

Belongs to the HSP33 family. Under oxidizing conditions two disulfide bonds are formed involving the reactive cysteines. Under reducing conditions zinc is bound to the reactive cysteines and the protein is inactive.

It localises to the cytoplasm. In terms of biological role, redox regulated molecular chaperone. Protects both thermally unfolding and oxidatively damaged proteins from irreversible aggregation. Plays an important role in the bacterial defense system toward oxidative stress. The polypeptide is 33 kDa chaperonin (Histophilus somni (strain 129Pt) (Haemophilus somnus)).